A 204-amino-acid polypeptide reads, in one-letter code: uncharacterized protein (204 aa).

The disordered stretch occupies residues 77 to 111; that stretch reads APHGSRIPGRCRRSPRCSRRPGGSRLRGGTWTPRL. Residues 85–95 show a composition bias toward basic residues; it reads GRCRRSPRCSR. Positions 96–105 are enriched in low complexity; the sequence is RPGGSRLRGG.

This is an uncharacterized protein from Homo sapiens (Human).